Consider the following 213-residue polypeptide: uncharacterized protein (213 aa).

The signal sequence occupies residues 1–19 (MKKVLLLLFVLTIGLALSA). Cys-20 carries the N-palmitoyl cysteine lipid modification. Cys-20 carries S-diacylglycerol cysteine lipidation. The segment at 20-62 (CSQSSDASEKEKPKEKKSQEELEKELDKELKKGGEPKTKKDDQ) is disordered. Over residues 26–62 (ASEKEKPKEKKSQEELEKELDKELKKGGEPKTKKDDQ) the composition is skewed to basic and acidic residues.

It localises to the cell membrane. This is an uncharacterized protein from Bacillus subtilis (strain 168).